Consider the following 418-residue polypeptide: Caveolae-associated protein 2 (418 aa).

The segment at 1-42 (MGEDAAQAEKFQHPNTDMLQEKPSSPSPMPSSTPSPSLNLGS) is disordered. N-acetylglycine is present on glycine 2. The segment at 2–168 (GEDAAQAEKF…IFQEESEIPA (167 aa)) is interaction with CAVIN1. Phosphoserine is present on residues serine 27, serine 35, serine 37, and serine 51. Coiled-coil stretches lie at residues 61–87 (LLDK…INLE) and 126–268 (RAVR…VERR). Positions 62–100 (LDKLVNMLDAVRENQHNMEQRQINLEGSVKGIQNDLTKL) are leucine-zipper. Position 196 is a phosphothreonine (threonine 196). Disordered stretches follow at residues 200–238 (VDLS…SLKK) and 262–382 (IVSV…ALQQ). Phosphoserine is present on residues serine 203, serine 204, and serine 218. The segment covering 203–219 (SSDDELPRDEEALEDSA) has biased composition (acidic residues). The segment covering 220 to 238 (EEKMEESRAEKIKRSSLKK) has biased composition (basic and acidic residues). The span at 275 to 287 (LTPNHQKASSGKS) shows a compositional bias: polar residues. 6 positions are modified to phosphoserine: serine 283, serine 284, serine 287, serine 288, serine 293, and serine 296. A compositionally biased stretch (basic and acidic residues) spans 303–321 (REGESSVENETKLEDQMQE). Serine 327, serine 336, serine 359, and serine 363 each carry phosphoserine. Residues 355-366 (RGNNSAVGSNAD) are compositionally biased toward polar residues. Threonine 368 carries the phosphothreonine modification. A compositionally biased stretch (acidic residues) spans 368 to 377 (TIEEDEEEEP). Tyrosine 388 carries the phosphotyrosine modification. A phosphoserine mark is found at serine 390 and serine 396. The tract at residues 396-418 (SEEMEEPSEKQVQPAVLHVDQTA) is disordered.

The protein belongs to the CAVIN family. As to quaternary structure, component of the CAVIN complex composed of CAVIN1, CAVIN2, CAVIN3 and CAVIN4. Binds to PRKCA in the presence of phosphatidylserine. Interacts with CAVIN4; this augments the transactivation of NPPA by CAVIN4. Interacts with CAVIN1. Interacts with CAV3. Post-translationally, the N-terminus is blocked. Heart, adipose tissue, lung and endothelial cells (at protein level). Highly expressed in kidney and expressed at lower levels in liver, spleen, thymus, stomach, intestine and uterus.

The protein localises to the cytoplasm. The protein resides in the cytosol. It is found in the membrane. It localises to the caveola. In terms of biological role, plays an important role in caveolar biogenesis and morphology. Regulates caveolae morphology by inducing membrane curvature within caveolae. Plays a role in caveola formation in a tissue-specific manner. Required for the formation of caveolae in the lung and fat endothelia but not in the heart endothelia. Negatively regulates the size or stability of CAVIN complexes in the lung endothelial cells. May play a role in targeting PRKCA to caveolae. The polypeptide is Caveolae-associated protein 2 (Cavin2) (Mus musculus (Mouse)).